We begin with the raw amino-acid sequence, 945 residues long: Valine--tRNA ligase (945 aa).

Residues 42–52 (PNVTGTLHMGH) carry the 'HIGH' region motif. Residues 552–556 (KMSKS) carry the 'KMSKS' region motif. Residue lysine 555 participates in ATP binding. Positions 879-945 (DKAAETARLS…VQNQLAKLKD (67 aa)) form a coiled coil.

It belongs to the class-I aminoacyl-tRNA synthetase family. ValS type 1 subfamily. As to quaternary structure, monomer.

It localises to the cytoplasm. It catalyses the reaction tRNA(Val) + L-valine + ATP = L-valyl-tRNA(Val) + AMP + diphosphate. Its function is as follows. Catalyzes the attachment of valine to tRNA(Val). As ValRS can inadvertently accommodate and process structurally similar amino acids such as threonine, to avoid such errors, it has a 'posttransfer' editing activity that hydrolyzes mischarged Thr-tRNA(Val) in a tRNA-dependent manner. This chain is Valine--tRNA ligase, found in Neisseria gonorrhoeae (strain ATCC 700825 / FA 1090).